Consider the following 256-residue polypeptide: uncharacterized protein (256 aa).

Positions 1–22 (MGYLKRIGMCISLLIVIIFVTS) are cleaved as a signal peptide. C23 is lipidated: N-palmitoyl cysteine. C23 carries S-diacylglycerol cysteine lipidation.

Belongs to the staphylococcal tandem lipoprotein family.

The protein localises to the cell membrane. This is an uncharacterized protein from Staphylococcus aureus (strain MSSA476).